Here is a 221-residue protein sequence, read N- to C-terminus: Ribonuclease S-2 (221 aa).

A signal peptide spans M1–A20. Q31 is a binding site for RNA. C37 and C44 form a disulfide bridge. RNA contacts are provided by residues H55, N91–V92, F101, K104–Q105, and K108–H109. Residue H55 is the Proton donor of the active site. C70 and C112 are oxidised to a cystine. An N-linked (GlcNAc...) asparagine glycan is attached at N91. Q105 is a catalytic residue. H109 serves as the catalytic Proton acceptor. N137, N153, and N195 each carry an N-linked (GlcNAc...) asparagine glycan. 2 cysteine pairs are disulfide-bonded: C176-C214 and C191-C202.

It belongs to the RNase T2 family. N-linked core structure at Asn-91, Asn-137, and Asn-153 contains xylose and at Asn-195 contains xylose and fucose.

The protein resides in the secreted. It is found in the extracellular space. It carries out the reaction a ribonucleotidyl-ribonucleotide-RNA + H2O = a 3'-end 3'-phospho-ribonucleotide-RNA + a 5'-end dephospho-ribonucleoside-RNA + H(+). Its function is as follows. Self-incompatibility (SI) is the inherited ability of a flowering plant to prevent self-fertilization by discriminating between self and non-self pollen during pollination. In many species, self-incompatibility is controlled by the single, multiallelic locus S. The protein is Ribonuclease S-2 of Pyrus pyrifolia (Chinese pear).